The sequence spans 189 residues: WASH complex subunit homolog 3 (189 aa).

The stretch at 35 to 74 (MTEMLNNFGNKMEDILEKAEQSLDTADRKLRLMESKLAGM) forms a coiled coil. Disordered stretches follow at residues 76–101 (LEDK…NPSS) and 150–189 (SEGV…SDSD). Basic and acidic residues predominate over residues 150 to 165 (SEGVDPSILKRGDEPS). The segment covering 167 to 189 (PQAQTSRNYESSGESTASFSDSD) has biased composition (polar residues). The residue at position 182 (Thr-182) is a Phosphothreonine.

Belongs to the CCDC53 family. Probable component of the WASH complex. Component of the DHIC (ddl-1-containing hsf-1 inhibitory complex), which contains at least ddl-1, ddl-2, hsb-1 and hsf-1. Within the complex, interacts with ddl-2. Within the complex, interacts with hsb-1. Within the complex, interacts with hsf-1. Formation of the DHIC may be dependent upon the Insulin/IGF-1-like signaling (IIS) mediated pathway. Phosphorylated. Phosphorylation on Thr-182 may promote DHIC complex dissociation and consequently the activation of heat-shock transcription factor hsf-1. Phosphorylation is modulated by the Insulin/IGF-1-like signaling (IIS) mediated pathway. Expressed in pharynx, intestine, body wall muscles, vulva muscles, spermatheca, and several head and tail neurons.

In terms of biological role, acts as a component of the WASH core complex that functions as a nucleation-promoting factor (NPF) at the surface of endosomes, where it recruits and activates the Arp2/3 complex to induce actin polymerization, playing a key role in the fission of tubules that serve as transport intermediates during endosome sorting. Acts as a component of the DHIC (ddl-1-containing hsf-1 inhibitory complex) which modulates lifespan by sequestering the heat-shock transcription factor hsf-1 to negatively regulate its binding to DNA and its transcriptional activity. This Caenorhabditis elegans protein is WASH complex subunit homolog 3 (ddl-1).